A 116-amino-acid chain; its full sequence is Protein V2 (116 aa).

It belongs to the geminiviridae protein AV2/V2 family. Interacts with host SGS3.

The protein resides in the host cytoplasm. It is found in the host perinuclear region. In terms of biological role, through its interaction with host SGS3, acts as a suppressor of RNA-mediated gene silencing, also known as post-transcriptional gene silencing (PTGS), a mechanism of plant viral defense that limits the accumulation of viral RNAs. This chain is Protein V2, found in Tomato yellow leaf curl virus (strain Israel) (TYLCV).